A 126-amino-acid polypeptide reads, in one-letter code: Large ribosomal subunit protein bL12 (126 aa).

Belongs to the bacterial ribosomal protein bL12 family. As to quaternary structure, homodimer. Part of the ribosomal stalk of the 50S ribosomal subunit. Forms a multimeric L10(L12)X complex, where L10 forms an elongated spine to which 2 to 4 L12 dimers bind in a sequential fashion. Binds GTP-bound translation factors.

In terms of biological role, forms part of the ribosomal stalk which helps the ribosome interact with GTP-bound translation factors. Is thus essential for accurate translation. The polypeptide is Large ribosomal subunit protein bL12 (Tropheryma whipplei (strain TW08/27) (Whipple's bacillus)).